The primary structure comprises 482 residues: UDP-N-acetylmuramate--L-alanine ligase (482 aa).

Position 129-135 (129-135 (GTHGKTT)) interacts with ATP.

This sequence belongs to the MurCDEF family.

The protein resides in the cytoplasm. It catalyses the reaction UDP-N-acetyl-alpha-D-muramate + L-alanine + ATP = UDP-N-acetyl-alpha-D-muramoyl-L-alanine + ADP + phosphate + H(+). The protein operates within cell wall biogenesis; peptidoglycan biosynthesis. Cell wall formation. The polypeptide is UDP-N-acetylmuramate--L-alanine ligase (Acinetobacter baumannii (strain SDF)).